The following is a 134-amino-acid chain: ATP synthase epsilon chain, chloroplastic (134 aa).

This sequence belongs to the ATPase epsilon chain family. F-type ATPases have 2 components, CF(1) - the catalytic core - and CF(0) - the membrane proton channel. CF(1) has five subunits: alpha(3), beta(3), gamma(1), delta(1), epsilon(1). CF(0) has three main subunits: a, b and c.

It is found in the plastid. Its subcellular location is the chloroplast thylakoid membrane. Produces ATP from ADP in the presence of a proton gradient across the membrane. In Pelargonium hortorum (Common geranium), this protein is ATP synthase epsilon chain, chloroplastic.